Reading from the N-terminus, the 122-residue chain is Autophagy-related protein 8b (122 aa).

G117 is lipidated: Phosphatidylethanolamine amidated glycine. Positions 118 to 122 are cleaved as a propeptide — removed in mature form; it reads GSFYC.

The protein belongs to the ATG8 family. In terms of assembly, interacts with ATG4. Interacts with NBR1. In terms of processing, the C-terminal 5 residues are removed by ATG4 to expose Gly-117 at the C-terminus. This Gly-117 forms then a thioester bond with the 'Cys-558' of ATG7 (E1-like activating enzyme) before being transferred to the 'Cys-258' of ATG3 (the specific E2 conjugating enzyme), in order to be finally amidated with phosphatidylethanolamine. This lipid modification anchors ATG8 to autophagosomes. In terms of tissue distribution, constitutively expressed.

It is found in the cytoplasmic vesicle. The protein localises to the autophagosome membrane. It localises to the vacuole membrane. Its subcellular location is the cytoplasm. The protein resides in the cytoskeleton. Its function is as follows. Ubiquitin-like modifier involved in autophagosomes formation. May mediate the delivery of the autophagosomes to the vacuole via the microtubule cytoskeleton. In Arabidopsis thaliana (Mouse-ear cress), this protein is Autophagy-related protein 8b (ATG8B).